We begin with the raw amino-acid sequence, 376 residues long: Histidinol dehydrogenase (376 aa).

NAD(+)-binding residues include Tyr-100 and Asn-182. Substrate-binding residues include Ser-205, Gln-227, and His-230. Gln-227 and His-230 together coordinate Zn(2+). Active-site proton acceptor residues include Glu-275 and His-276. Positions 276, 309, 363, and 368 each coordinate substrate. Residue Asp-309 participates in Zn(2+) binding. His-368 lines the Zn(2+) pocket.

Belongs to the histidinol dehydrogenase family. The cofactor is Zn(2+).

The enzyme catalyses L-histidinol + 2 NAD(+) + H2O = L-histidine + 2 NADH + 3 H(+). It functions in the pathway amino-acid biosynthesis; L-histidine biosynthesis; L-histidine from 5-phospho-alpha-D-ribose 1-diphosphate: step 9/9. Its function is as follows. Catalyzes the sequential NAD-dependent oxidations of L-histidinol to L-histidinaldehyde and then to L-histidine. The sequence is that of Histidinol dehydrogenase from Thermococcus kodakarensis (strain ATCC BAA-918 / JCM 12380 / KOD1) (Pyrococcus kodakaraensis (strain KOD1)).